The primary structure comprises 682 residues: Actin-binding LIM protein 3 (682 aa).

Residue Met1 is modified to N-acetylmethionine. 4 LIM zinc-binding domains span residues Ile21 to Thr80, Thr80 to Ser140, Ser149 to Ile208, and Ile208 to Glu268. Residues Ser277, Ser280, Ser282, Ser286, Ser290, Ser337, Ser372, and Ser373 each carry the phosphoserine modification. Disordered stretches follow at residues Ser372 to Ala426 and Tyr440 to Ser475. Residue Tyr376 is modified to Phosphotyrosine. 2 positions are modified to phosphoserine: Ser379 and Ser388. 3 stretches are compositionally biased toward polar residues: residues Pro380–Arg393, Gly405–Gln425, and Ser453–Gln466. Phosphoserine occurs at positions 492, 502, and 503. Thr542 is subject to Phosphothreonine. A phosphoserine mark is found at Ser566, Ser575, and Ser606. One can recognise an HP domain in the interval Met614–Phe682. Arg630 carries the omega-N-methylarginine modification.

Directly interacts with F-actin and ABRA. In terms of tissue distribution, expressed in heart, brain, lung and liver. In the brain, highly expressed in the olfactory bulb. In the hippocampus, expressed selectively in the CA2 and CA3 fields. In the cerebellum, expressed in internal granular cells.

It localises to the cytoplasm. Functionally, may act as scaffold protein. May stimulate ABRA activity and ABRA-dependent SRF transcriptional activity. The protein is Actin-binding LIM protein 3 (Ablim3) of Mus musculus (Mouse).